A 683-amino-acid polypeptide reads, in one-letter code: Boron transporter 4 (683 aa).

Over 1–38 (MEEERVDSSKRLFRGIVADLRGRALCYKEDWVAGLRSG) the chain is Cytoplasmic. A helical transmembrane segment spans residues 39–59 (FGILAPTTYIFFASALPVIAF). The Extracellular segment spans residues 60–80 (GEQLSRDTEGALSTVETLAST). The helical transmembrane segment at 81-101 (ALCGVIHSILGGQPLLILGVA) threads the bilayer. Over 102 to 126 (EPTVLMYVYLYNFAIGRPELGKQLY) the chain is Cytoplasmic. A helical transmembrane segment spans residues 127 to 147 (LAWAAWVCVWTALLLFVMAIL). At 148–160 (NTADIINRFTRVA) the chain is on the extracellular side. Residues 161 to 181 (GELFGMLISVLFIQQAIKGMV) traverse the membrane as a helical segment. At 182-200 (SEFGMPKDEDSKLEKYKFE) the chain is on the cytoplasmic side. A helical membrane pass occupies residues 201–221 (WLYTNGLLGLIFTFGLLYTAL). Topologically, residues 222 to 238 (KSRKARSWRYGTGWYRS) are extracellular. Residues 239 to 259 (FIADYGVPLMVVVWTALSFST) traverse the membrane as a helical segment. Residues 260–294 (PSKLPSGVPRRLFSPLPWDSPSLSHWTVIKDMGKV) are Cytoplasmic-facing. The helical transmembrane segment at 295-315 (SPGYIFAAFIPALMIAGLYFF) threads the bilayer. At 316 to 335 (DHSVASQLAQQKEFNLKKPS) the chain is on the extracellular side. Residues 336-356 (AYHYDILLLGFMTLICGLLGL) form a helical membrane-spanning segment. At 357–477 (PPSNGVLPQS…EQRVSNLLQS (121 aa)) the chain is on the cytoplasmic side. Residues 478–498 (LLVAGAVLAMPAIKLIPTSIL) traverse the membrane as a helical segment. At 499-565 (WGYFAYMAID…QIFYFGLCYG (67 aa)) the chain is on the extracellular side. A helical membrane pass occupies residues 566-586 (VTWIPVAGIMFPVPFFLLIAI). Residues 587 to 683 (RQYILPKLFN…GDGDMSTTRE (97 aa)) are Cytoplasmic-facing. 2 disordered regions span residues 617 to 638 (NPLE…GDAE) and 661 to 683 (KGNQ…TTRE).

It belongs to the anion exchanger (TC 2.A.31.3) family. As to expression, expressed in the distal sides of epidermal cells in the elongation zone of roots.

It is found in the membrane. Functionally, efflux-type boron transporter polarly localized in roots. Boron is essential for maintaining the integrity of plants cell walls. The polypeptide is Boron transporter 4 (BOR4) (Arabidopsis thaliana (Mouse-ear cress)).